Here is a 439-residue protein sequence, read N- to C-terminus: Lipase 1 (439 aa).

The signal sequence occupies residues 1–24; that stretch reads MRCSLRMQLLLLLGLCVFISRIQG. The disordered stretch occupies residues 28–60; sequence GGEEDEEDEEEEEEEEESVEDETPEDRLQRKNI. The segment covering 29-51 has biased composition (acidic residues); the sequence is GEEDEEDEEEEEEEEESVEDETP. N-linked (GlcNAc...) asparagine glycans are attached at residues asparagine 124 and asparagine 151. Serine 197 serves as the catalytic Charge relay system. N-linked (GlcNAc...) asparagine glycosylation is found at asparagine 346 and asparagine 379. The active-site Charge relay system is histidine 393. Asparagine 426 carries an N-linked (GlcNAc...) asparagine glycan.

It belongs to the AB hydrolase superfamily. Lipase family. As to expression, in 14 hours embryos expression is seen in the foregut/midgut boundary.

The protein resides in the secreted. In terms of biological role, could be a digestive enzyme. This is Lipase 1 (Lip1) from Drosophila melanogaster (Fruit fly).